The chain runs to 480 residues: Proline--tRNA ligase (480 aa).

This sequence belongs to the class-II aminoacyl-tRNA synthetase family. ProS type 3 subfamily. In terms of assembly, homodimer.

The protein resides in the cytoplasm. The enzyme catalyses tRNA(Pro) + L-proline + ATP = L-prolyl-tRNA(Pro) + AMP + diphosphate. Functionally, catalyzes the attachment of proline to tRNA(Pro) in a two-step reaction: proline is first activated by ATP to form Pro-AMP and then transferred to the acceptor end of tRNA(Pro). This is Proline--tRNA ligase from Roseiflexus sp. (strain RS-1).